The sequence spans 358 residues: D-xylulose reductase A (358 aa).

Zn(2+) contacts are provided by Cys47, His72, and Glu73. 182 to 187 contacts NAD(+); sequence GAGPVG.

It belongs to the zinc-containing alcohol dehydrogenase family. Zn(2+) serves as cofactor.

It carries out the reaction xylitol + NAD(+) = D-xylulose + NADH + H(+). It participates in carbohydrate degradation; L-arabinose degradation via L-arabinitol; D-xylulose 5-phosphate from L-arabinose (fungal route): step 4/5. In terms of biological role, xylitol dehydrogenase which catalyzes the conversion of xylitol to D-xylulose. Xylose is a major component of hemicelluloses such as xylan. Most fungi utilize D-xylose via three enzymatic reactions, xylose reductase (XR), xylitol dehydrogenase (XDH), and xylulokinase, to form xylulose 5-phosphate, which enters pentose phosphate pathway. The polypeptide is D-xylulose reductase A (xdhA) (Aspergillus oryzae (strain ATCC 42149 / RIB 40) (Yellow koji mold)).